The following is a 303-amino-acid chain: MGRPLLLPLLPLLLPPAFLQPSGSTGSGPSYLYGVTQPKHLSASMGGSVEIPFSFYYPWELATAPDVRISWRRGHFHRQSFYSTRPPSIHKDYVNRLFLNWTEGQKSGFLRISNLQKQDQSVYFCRVELDTRSSGRQQWQSIEGTKLSITQAVTTTTQRPSSMTTTWRLSSTTTTTGLRVTQGKRRSDSWHISLETAVGVAVAVTVLGIMILGLICLLRWRRRKGQQRTKATTPAREPFQNTEEPYENIRNEGQNTDPKLNPKDDGIVYASLALSSSTSPRAPPSHRPLKSPQNETLYSVLKA.

The first 19 residues, 1 to 19 (MGRPLLLPLLPLLLPPAFL), serve as a signal peptide directing secretion. Over 20–197 (QPSGSTGSGP…DSWHISLETA (178 aa)) the chain is Extracellular. An Ig-like V-type domain is found at 32-150 (LYGVTQPKHL…SIEGTKLSIT (119 aa)). A glycan (N-linked (GlcNAc...) asparagine) is linked at Asn-100. A helical membrane pass occupies residues 198 to 218 (VGVAVAVTVLGIMILGLICLL). Topologically, residues 219 to 303 (RWRRRKGQQR…NETLYSVLKA (85 aa)) are cytoplasmic. Residues 226 to 296 (QQRTKATTPA…RPLKSPQNET (71 aa)) form a disordered region. 2 short sequence motifs (ITIM motif) span residues 267–272 (IVYASL) and 296–301 (TLYSVL).

As to quaternary structure, monomer. Interacts with PTPN6/SHP-1 and PTPN11/SHP-2 upon tyrosine phosphorylation. In terms of assembly, (Microbial infection) Interacts with herpes simplex virus 1 glycoprotein B. Post-translationally, according to PubMed:10660620, N- and O-glycosylated. According to PubMed:10903717, only N-glycosylated. In terms of processing, phosphorylated on tyrosine residues. As to expression, predominantly detected in hemopoietic tissues and is expressed by monocytes, macrophages, and granulocytes, but not by lymphocytes. Also strongly expressed by dendritic cells (DC); preferentially by CD14+/CD1a- DC derived from CD34+ progenitors. Also expressed by CD11c+ blood and tonsil DC, but not by CD11c- DC precursors.

It localises to the cell membrane. The protein resides in the secreted. Paired receptors consist of highly related activating and inhibitory receptors and are widely involved in the regulation of the immune system. PILRA is thought to act as a cellular signaling inhibitory receptor by recruiting cytoplasmic phosphatases like PTPN6/SHP-1 and PTPN11/SHP-2 via their SH2 domains that block signal transduction through dephosphorylation of signaling molecules. Receptor for PIANP. In terms of biological role, (Microbial infection) Acts as an entry co-receptor for herpes simplex virus 1. The sequence is that of Paired immunoglobulin-like type 2 receptor alpha (PILRA) from Homo sapiens (Human).